The primary structure comprises 280 residues: DCN1-like protein 4 (280 aa).

The interval glycine 37–glutamine 71 is disordered. The region spanning phenylalanine 89–lysine 275 is the DCUN1 domain.

May interact (via the DCUN1 domain) with unneddylated cullins.

It is found in the nucleus. In terms of biological role, contributes to the neddylation of all cullins by transferring NEDD8 from N-terminally acetylated NEDD8-conjugating E2s enzyme to different cullin C-terminal domain-RBX complexes. The chain is DCN1-like protein 4 from Danio rerio (Zebrafish).